Here is a 339-residue protein sequence, read N- to C-terminus: DNA-directed RNA polymerase subunit alpha (339 aa).

The segment at 1–235 (MTIQKNWQEL…DQLNVFVNFE (235 aa)) is alpha N-terminal domain (alpha-NTD). An alpha C-terminal domain (alpha-CTD) region spans residues 251-339 (FNPAFLKKVD…ELAKRFEDHY (89 aa)).

Belongs to the RNA polymerase alpha chain family. Homodimer. The RNAP catalytic core consists of 2 alpha, 1 beta, 1 beta' and 1 omega subunit. When a sigma factor is associated with the core the holoenzyme is formed, which can initiate transcription.

It catalyses the reaction RNA(n) + a ribonucleoside 5'-triphosphate = RNA(n+1) + diphosphate. Its function is as follows. DNA-dependent RNA polymerase catalyzes the transcription of DNA into RNA using the four ribonucleoside triphosphates as substrates. This Rhodopseudomonas palustris (strain BisB18) protein is DNA-directed RNA polymerase subunit alpha.